The sequence spans 681 residues: UvrABC system protein C (681 aa).

Residues 16-95 (DSPGVYKFRD…IKEYDPRFNV (80 aa)) enclose the GIY-YIG domain. The region spanning 208 to 243 (GTYIRRLERQMTDAAEEMEYEKAARLRDDIGALKKA) is the UVR domain. The interval 650–681 (EIMEDEEPGTTAGSSQEPVSAGTSDERRGQET) is disordered. The span at 660–672 (TAGSSQEPVSAGT) shows a compositional bias: polar residues.

The protein belongs to the UvrC family. As to quaternary structure, interacts with UvrB in an incision complex.

It is found in the cytoplasm. The UvrABC repair system catalyzes the recognition and processing of DNA lesions. UvrC both incises the 5' and 3' sides of the lesion. The N-terminal half is responsible for the 3' incision and the C-terminal half is responsible for the 5' incision. The polypeptide is UvrABC system protein C (Streptomyces avermitilis (strain ATCC 31267 / DSM 46492 / JCM 5070 / NBRC 14893 / NCIMB 12804 / NRRL 8165 / MA-4680)).